Consider the following 70-residue polypeptide: Conotoxin ArMKLT2-0111 (70 aa).

Positions 1–22 (MKLTCVLIIAVLFLTACQLTTG) are cleaved as a signal peptide. A propeptide spanning residues 23-40 (EQKDHALRSTDKNSKLTR) is cleaved from the precursor. Gln41 carries the post-translational modification Pyrrolidone carboxylic acid. Disulfide bonds link Cys42-Cys56, Cys49-Cys60, and Cys55-Cys67.

The protein belongs to the conotoxin O1 superfamily. As to expression, expressed by the venom duct.

The protein localises to the secreted. This is Conotoxin ArMKLT2-0111 from Conus arenatus (Sand-dusted cone).